A 300-amino-acid chain; its full sequence is Protein Bel-1 (300 aa).

3 disordered regions span residues 1 to 20, 26 to 50, and 185 to 237; these read MDSY…QDLQ, VGPE…RRPR, and KPST…GDTV. Positions 11–20 are enriched in polar residues; sequence ASTSGLQDLQ. A DNA-binding region spans residues 89–200; that stretch reads SKSICKRLIL…PEGPKPRRRH (112 aa). The span at 201 to 210 shows a compositional bias: basic and acidic residues; sequence DPVLRCDMFE. Residues 211-222 show a composition bias toward basic residues; that stretch reads KHHKPRPKRSRK. Positions 214-223 match the Nuclear localization signal motif; that stretch reads KPRPKRSRKR. The tract at residues 224-300 is transactivation domain; the sequence is SIDHESCASS…PSGSGEHSVL (77 aa).

In terms of assembly, homodimer or homomultimer. Forms complexes with the host nuclear factors NFIA, NFIB, NFIC or NFIX.

It is found in the host nucleus. Functionally, transcriptional transactivator that activates the viral internal promoter (IP), thereby enhancing its own expression. This transactivation is repressed by nuclear factor I. Also transactivates the long terminal repeat (LTR) promoter, thereby inducing structural gene expression, initiating the late phase of infection. It is therefore a key regulator of viral gene expression. It directly binds to and activates DNA target sites of viral promoters and those of distinct cellular genes. Required for viral replication. In Pan troglodytes (Chimpanzee), this protein is Protein Bel-1 (bel1).